Reading from the N-terminus, the 159-residue chain is Ribosomal RNA large subunit methyltransferase H (159 aa).

S-adenosyl-L-methionine is bound by residues L76, G108, and 127–132 (FGRLTL).

The protein belongs to the RNA methyltransferase RlmH family. Homodimer.

The protein localises to the cytoplasm. The enzyme catalyses pseudouridine(1915) in 23S rRNA + S-adenosyl-L-methionine = N(3)-methylpseudouridine(1915) in 23S rRNA + S-adenosyl-L-homocysteine + H(+). In terms of biological role, specifically methylates the pseudouridine at position 1915 (m3Psi1915) in 23S rRNA. The sequence is that of Ribosomal RNA large subunit methyltransferase H from Streptococcus uberis (strain ATCC BAA-854 / 0140J).